Reading from the N-terminus, the 195-residue chain is CASP-like protein IN26 (195 aa).

Residues 1-26 (VAPTGSVETEKAGPSYKPKEYYKVTE) are Cytoplasmic-facing. A helical membrane pass occupies residues 27 to 47 (AILRLLLLASLVVAVVVMVTS). Residues 48 to 75 (KETELISVKLDPFPPFMLPLTAKFTQSP) lie on the Extracellular side of the membrane. A helical membrane pass occupies residues 76–96 (AFIYFVAGLSVAGLYTIISTL). The Cytoplasmic portion of the chain corresponds to 97-120 (ASFYNLLIKPGFCPALVSHFIILD). The helical transmembrane segment at 121–143 (VVMLGIVGTATGAAGGVAYIGLK) threads the bilayer. Residues 144–163 (GNSHVGWTKVCNKYGKLCTH) are Extracellular-facing. A helical transmembrane segment spans residues 164–184 (LGASLAVSFFAFIVLLLLIIL). Residues 185 to 195 (SIHSLSKKIPK) lie on the Cytoplasmic side of the membrane.

The protein belongs to the Casparian strip membrane proteins (CASP) family. Homodimer and heterodimers.

It is found in the cell membrane. This chain is CASP-like protein IN26 (IN26), found in Ipomoea nil (Japanese morning glory).